The primary structure comprises 42 residues: Beta-2-microglobulin (42 aa).

An Ig-like C1-type domain is found at 5–42 (PKIQVYSRHPAZBGKPBFLBCYVSGFHPXZIZIBLLKB).

As to quaternary structure, heterodimer of an alpha chain and a beta chain. Beta-2-microglobulin is the beta-chain of major histocompatibility complex class I molecules.

It is found in the secreted. Component of the class I major histocompatibility complex (MHC). Involved in the presentation of peptide antigens to the immune system. This is Beta-2-microglobulin (B2M) from Canis lupus familiaris (Dog).